Here is a 348-residue protein sequence, read N- to C-terminus: MKKITLIRPDDWHCHLRDGSYLPRTVADIAAQFNRAIVMPNLVPPITTVQQAKAYYDRIKAHVPKSSNFEPLMTLYLTESTPQQEIKAAQQSGIIVACKLYPAGATTHSQAGVKDLKAIYTLLETMQSVDLPLLIHGEVVDYAVDIFDREAVFIERELLPLVETFPQLRIVFEHISTKIAVDFVLEAPSKLGATITPHHLLFNRNDLLSGSIRPHYYCLPILKTSEDQMALIQAATSGNPKFFLGTDSAPHSQTKKQSICGSAGIYNAPAAIALYAEIFASQNALDKLEGFASRFGAEFYGLPLNNSQITLIHQPWQVAESLPFGNELVVPLFAGQTLQWQIKSHEHK.

Zn(2+) is bound by residues His-13 and His-15. Substrate contacts are provided by residues 15–17 (HLR) and Asn-41. Zn(2+)-binding residues include Lys-99, His-136, and His-174. At Lys-99 the chain carries N6-carboxylysine. Residue His-136 participates in substrate binding. Substrate is bound at residue Leu-219. Asp-247 serves as a coordination point for Zn(2+). The active site involves Asp-247. Positions 251 and 263 each coordinate substrate.

It belongs to the metallo-dependent hydrolases superfamily. DHOase family. Class II DHOase subfamily. As to quaternary structure, homodimer. Zn(2+) serves as cofactor.

The enzyme catalyses (S)-dihydroorotate + H2O = N-carbamoyl-L-aspartate + H(+). The protein operates within pyrimidine metabolism; UMP biosynthesis via de novo pathway; (S)-dihydroorotate from bicarbonate: step 3/3. Functionally, catalyzes the reversible cyclization of carbamoyl aspartate to dihydroorotate. The sequence is that of Dihydroorotase from Coxiella burnetii (strain RSA 331 / Henzerling II).